The primary structure comprises 525 residues: uncharacterized protein (525 aa).

The next 6 membrane-spanning stretches (helical) occupy residues 7–29 (FLAT…LGQI), 34–51 (LRFG…VGAL), 64–82 (GLGV…GSTF), 92–114 (LMLA…GRLF), 121–143 (VAGL…ATHG), and 148–170 (LVGY…AIIA). RCK C-terminal domains follow at residues 178 to 257 (KDNT…LGHV) and 259 to 341 (ERTL…LFGD). The next 5 membrane-spanning stretches (helical) occupy residues 351-370 (ALSL…LMVA), 374-396 (GLQF…GSIH), 416-438 (LGLM…SQAV), 443-465 (LAVI…AAAW), and 502-524 (SAYG…VIVL).

Belongs to the AAE transporter (TC 2.A.81) family.

It localises to the cell membrane. This is an uncharacterized protein from Cutibacterium acnes (strain DSM 16379 / KPA171202) (Propionibacterium acnes).